The sequence spans 492 residues: 6-phosphogluconate dehydrogenase, decarboxylating 2 (492 aa).

NADP(+) is bound by residues 12–17, 35–37, 77–79, and asparagine 105; these read GLAVMG, NRT, and IKA. Residues asparagine 105 and 131–133 contribute to the substrate site; that span reads SGG. Lysine 185 acts as the Proton acceptor in catalysis. 188–189 contacts substrate; the sequence is HN. The Proton donor role is filled by glutamate 192. Positions 193, 262, 289, 449, and 455 each coordinate substrate.

It belongs to the 6-phosphogluconate dehydrogenase family. Homodimer.

It carries out the reaction 6-phospho-D-gluconate + NADP(+) = D-ribulose 5-phosphate + CO2 + NADPH. It functions in the pathway carbohydrate degradation; pentose phosphate pathway; D-ribulose 5-phosphate from D-glucose 6-phosphate (oxidative stage): step 3/3. Its function is as follows. Catalyzes the oxidative decarboxylation of 6-phosphogluconate to ribulose 5-phosphate and CO(2), with concomitant reduction of NADP to NADPH. In Saccharomyces cerevisiae (strain ATCC 204508 / S288c) (Baker's yeast), this protein is 6-phosphogluconate dehydrogenase, decarboxylating 2 (GND2).